The following is a 271-amino-acid chain: Phthiotriol/phenolphthiotriol dimycocerosates methyltransferase 1 (271 aa).

The protein belongs to the methyltransferase superfamily. Phthiotriol/phenolphthiotriol dimycocerosates methyltransferase family.

Functionally, catalyzes the methylation of the lipid moiety of the intermediate compounds phthiotriol and glycosylated phenolphthiotriol dimycoserosates to form phthiocerol dimycocerosates (DIM A) and glycosylated phenolphthiocerol dimycocerosates (PGL). The protein is Phthiotriol/phenolphthiotriol dimycocerosates methyltransferase 1 of Mycobacterium ulcerans (strain Agy99).